The primary structure comprises 60 residues: Conotoxin Pu5.6 (60 aa).

Residues 1–19 (MRCVPVFVILLLLIASAAS) form the signal peptide. Residues 20–47 (IDAQQKTKDDAPLTSLNDNALQQHWNKR) constitute a propeptide that is removed on maturation.

This sequence belongs to the conotoxin T superfamily. Contains 2 disulfide bonds that can be either 'C1-C3, C2-C4' or 'C1-C4, C2-C3', since these disulfide connectivities have been observed for conotoxins with cysteine framework V (for examples, see AC P0DQQ7 and AC P81755). As to expression, expressed by the venom duct.

Its subcellular location is the secreted. In Conus pulicarius (Flea-bitten cone), this protein is Conotoxin Pu5.6.